Here is a 127-residue protein sequence, read N- to C-terminus: Fluoride-specific ion channel FluC (127 aa).

4 consecutive transmembrane segments (helical) span residues 4–24 (IMLA…WLGL), 35–55 (VGTL…LAWF), 71–91 (TGLC…VFLL), and 101–121 (LNVA…FWLF). Na(+) is bound by residues glycine 75 and threonine 78.

Belongs to the fluoride channel Fluc/FEX (TC 1.A.43) family.

The protein resides in the cell inner membrane. It catalyses the reaction fluoride(in) = fluoride(out). Na(+) is not transported, but it plays an essential structural role and its presence is essential for fluoride channel function. Its function is as follows. Fluoride-specific ion channel. Important for reducing fluoride concentration in the cell, thus reducing its toxicity. This Cronobacter sakazakii (strain ATCC BAA-894) (Enterobacter sakazakii) protein is Fluoride-specific ion channel FluC.